Reading from the N-terminus, the 373-residue chain is Chaperone protein DnaJ (373 aa).

Residues 4 to 69 (SYYEILEITQ…EKRAIYDRYG (66 aa)) enclose the J domain. The CR-type zinc finger occupies 135–212 (GCKKNIDFTY…CKGLGYNESK (78 aa)). 8 residues coordinate Zn(2+): Cys148, Cys151, Cys164, Cys167, Cys186, Cys189, Cys200, and Cys203. 4 CXXCXGXG motif repeats span residues 148–155 (CKTCNGTG), 164–171 (CPKCQGRG), 186–193 (CPDCQGIG), and 200–207 (CSDCKGLG).

The protein belongs to the DnaJ family. Homodimer. Zn(2+) serves as cofactor.

The protein resides in the cytoplasm. In terms of biological role, participates actively in the response to hyperosmotic and heat shock by preventing the aggregation of stress-denatured proteins and by disaggregating proteins, also in an autonomous, DnaK-independent fashion. Unfolded proteins bind initially to DnaJ; upon interaction with the DnaJ-bound protein, DnaK hydrolyzes its bound ATP, resulting in the formation of a stable complex. GrpE releases ADP from DnaK; ATP binding to DnaK triggers the release of the substrate protein, thus completing the reaction cycle. Several rounds of ATP-dependent interactions between DnaJ, DnaK and GrpE are required for fully efficient folding. Also involved, together with DnaK and GrpE, in the DNA replication of plasmids through activation of initiation proteins. This Campylobacter jejuni subsp. jejuni serotype O:2 (strain ATCC 700819 / NCTC 11168) protein is Chaperone protein DnaJ.